The following is a 1371-amino-acid chain: Probable serine/threonine-protein kinase DDB_G0293292 (1371 aa).

Protein kinase domains lie at 9-269 (NKIL…HPNT) and 1131-1371 (FKEV…QPTL). Residues 15 to 23 (IDDGNTKRK) and K39 contribute to the ATP site. The Proton acceptor role is filled by D143.

This sequence belongs to the protein kinase superfamily. Ser/Thr protein kinase family.

It carries out the reaction L-seryl-[protein] + ATP = O-phospho-L-seryl-[protein] + ADP + H(+). The enzyme catalyses L-threonyl-[protein] + ATP = O-phospho-L-threonyl-[protein] + ADP + H(+). This is Probable serine/threonine-protein kinase DDB_G0293292 from Dictyostelium discoideum (Social amoeba).